A 90-amino-acid chain; its full sequence is Elongation factor 1-beta (90 aa).

Belongs to the EF-1-beta/EF-1-delta family.

Promotes the exchange of GDP for GTP in EF-1-alpha/GDP, thus allowing the regeneration of EF-1-alpha/GTP that could then be used to form the ternary complex EF-1-alpha/GTP/AAtRNA. The sequence is that of Elongation factor 1-beta from Sulfolobus acidocaldarius (strain ATCC 33909 / DSM 639 / JCM 8929 / NBRC 15157 / NCIMB 11770).